The sequence spans 37 residues: Large ribosomal subunit protein bL36 (37 aa).

The protein belongs to the bacterial ribosomal protein bL36 family.

This chain is Large ribosomal subunit protein bL36, found in Acidovorax ebreus (strain TPSY) (Diaphorobacter sp. (strain TPSY)).